A 452-amino-acid chain; its full sequence is Bifunctional protein GlmU (452 aa).

The tract at residues 1–224 (MNIVILAAGM…EWETHGVNSK (224 aa)) is pyrophosphorylase. UDP-N-acetyl-alpha-D-glucosamine contacts are provided by residues 6–9 (LAAG), lysine 20, glutamine 71, 76–77 (GT), 98–100 (YGD), glycine 135, glutamate 149, asparagine 164, and asparagine 222. A Mg(2+)-binding site is contributed by aspartate 100. Residue asparagine 222 participates in Mg(2+) binding. Residues 225–245 (VQLAELERIHQRNIAHALLEQ) form a linker region. The segment at 246–452 (GVTLADPARI…NWQRPVKIKK (207 aa)) is N-acetyltransferase. UDP-N-acetyl-alpha-D-glucosamine contacts are provided by arginine 328 and lysine 346. Residue histidine 358 is the Proton acceptor of the active site. UDP-N-acetyl-alpha-D-glucosamine contacts are provided by tyrosine 361 and asparagine 372. Acetyl-CoA-binding positions include alanine 375, 381-382 (NY), serine 400, alanine 418, and arginine 435.

It in the N-terminal section; belongs to the N-acetylglucosamine-1-phosphate uridyltransferase family. This sequence in the C-terminal section; belongs to the transferase hexapeptide repeat family. Homotrimer. It depends on Mg(2+) as a cofactor.

Its subcellular location is the cytoplasm. The catalysed reaction is alpha-D-glucosamine 1-phosphate + acetyl-CoA = N-acetyl-alpha-D-glucosamine 1-phosphate + CoA + H(+). The enzyme catalyses N-acetyl-alpha-D-glucosamine 1-phosphate + UTP + H(+) = UDP-N-acetyl-alpha-D-glucosamine + diphosphate. Its pathway is nucleotide-sugar biosynthesis; UDP-N-acetyl-alpha-D-glucosamine biosynthesis; N-acetyl-alpha-D-glucosamine 1-phosphate from alpha-D-glucosamine 6-phosphate (route II): step 2/2. The protein operates within nucleotide-sugar biosynthesis; UDP-N-acetyl-alpha-D-glucosamine biosynthesis; UDP-N-acetyl-alpha-D-glucosamine from N-acetyl-alpha-D-glucosamine 1-phosphate: step 1/1. It functions in the pathway bacterial outer membrane biogenesis; LPS lipid A biosynthesis. In terms of biological role, catalyzes the last two sequential reactions in the de novo biosynthetic pathway for UDP-N-acetylglucosamine (UDP-GlcNAc). The C-terminal domain catalyzes the transfer of acetyl group from acetyl coenzyme A to glucosamine-1-phosphate (GlcN-1-P) to produce N-acetylglucosamine-1-phosphate (GlcNAc-1-P), which is converted into UDP-GlcNAc by the transfer of uridine 5-monophosphate (from uridine 5-triphosphate), a reaction catalyzed by the N-terminal domain. This is Bifunctional protein GlmU from Janthinobacterium sp. (strain Marseille) (Minibacterium massiliensis).